A 163-amino-acid chain; its full sequence is Crossover junction endodeoxyribonuclease RuvC (163 aa).

Residues aspartate 8, glutamate 68, and aspartate 140 contribute to the active site. Mg(2+) contacts are provided by aspartate 8, glutamate 68, and aspartate 140.

Belongs to the RuvC family. Homodimer which binds Holliday junction (HJ) DNA. The HJ becomes 2-fold symmetrical on binding to RuvC with unstacked arms; it has a different conformation from HJ DNA in complex with RuvA. In the full resolvosome a probable DNA-RuvA(4)-RuvB(12)-RuvC(2) complex forms which resolves the HJ. It depends on Mg(2+) as a cofactor.

Its subcellular location is the cytoplasm. The catalysed reaction is Endonucleolytic cleavage at a junction such as a reciprocal single-stranded crossover between two homologous DNA duplexes (Holliday junction).. Functionally, the RuvA-RuvB-RuvC complex processes Holliday junction (HJ) DNA during genetic recombination and DNA repair. Endonuclease that resolves HJ intermediates. Cleaves cruciform DNA by making single-stranded nicks across the HJ at symmetrical positions within the homologous arms, yielding a 5'-phosphate and a 3'-hydroxyl group; requires a central core of homology in the junction. The consensus cleavage sequence is 5'-(A/T)TT(C/G)-3'. Cleavage occurs on the 3'-side of the TT dinucleotide at the point of strand exchange. HJ branch migration catalyzed by RuvA-RuvB allows RuvC to scan DNA until it finds its consensus sequence, where it cleaves and resolves the cruciform DNA. This is Crossover junction endodeoxyribonuclease RuvC from Erythrobacter litoralis (strain HTCC2594).